The chain runs to 244 residues: Probable proteasome subunit alpha type-1 (244 aa).

It belongs to the peptidase T1A family. The 26S proteasome consists of a 20S proteasome core and two 19S regulatory subunits. The 20S proteasome core is composed of 28 subunits that are arranged in four stacked rings, resulting in a barrel-shaped structure. The two end rings are each formed by seven alpha subunits, and the two central rings are each formed by seven beta subunits. The catalytic chamber with the active sites is on the inside of the barrel.

The protein localises to the cytoplasm. It localises to the nucleus. Its function is as follows. The proteasome is a multicatalytic proteinase complex which is characterized by its ability to cleave peptides with Arg, Phe, Tyr, Leu, and Glu adjacent to the leaving group at neutral or slightly basic pH. The proteasome has an ATP-dependent proteolytic activity. This chain is Probable proteasome subunit alpha type-1, found in Schizosaccharomyces pombe (strain 972 / ATCC 24843) (Fission yeast).